The following is a 132-amino-acid chain: Large ribosomal subunit protein uL24 (132 aa).

The protein belongs to the universal ribosomal protein uL24 family. As to quaternary structure, part of the 50S ribosomal subunit.

One of two assembly initiator proteins, it binds directly to the 5'-end of the 23S rRNA, where it nucleates assembly of the 50S subunit. In terms of biological role, one of the proteins that surrounds the polypeptide exit tunnel on the outside of the subunit. The polypeptide is Large ribosomal subunit protein uL24 (Aquifex aeolicus (strain VF5)).